The sequence spans 407 residues: Na(+)-translocating NADH-quinone reductase subunit F (407 aa).

A helical transmembrane segment spans residues 6–26 (IFLAIGMFTAIVLGLVAIILV). One can recognise a 2Fe-2S ferredoxin-type domain in the interval 35–127 (GDVTIQINGE…DMQIRVPEEV (93 aa)). 4 residues coordinate [2Fe-2S] cluster: Cys-70, Cys-76, Cys-79, and Cys-111. An FAD-binding FR-type domain is found at 130-269 (VKKWECTVES…YGPFGEFFAK (140 aa)).

It belongs to the NqrF family. As to quaternary structure, composed of six subunits; NqrA, NqrB, NqrC, NqrD, NqrE and NqrF. The cofactor is [2Fe-2S] cluster. FAD is required as a cofactor.

The protein localises to the cell inner membrane. The enzyme catalyses a ubiquinone + n Na(+)(in) + NADH + H(+) = a ubiquinol + n Na(+)(out) + NAD(+). Functionally, NQR complex catalyzes the reduction of ubiquinone-1 to ubiquinol by two successive reactions, coupled with the transport of Na(+) ions from the cytoplasm to the periplasm. The first step is catalyzed by NqrF, which accepts electrons from NADH and reduces ubiquinone-1 to ubisemiquinone by a one-electron transfer pathway. The protein is Na(+)-translocating NADH-quinone reductase subunit F of Pseudomonas aeruginosa (strain UCBPP-PA14).